The following is a 436-amino-acid chain: Serine--tRNA ligase (436 aa).

Threonine 239–glutamate 241 provides a ligand contact to L-serine. Arginine 270–glutamate 272 contributes to the ATP binding site. Glutamate 293 serves as a coordination point for L-serine. Residue glutamate 357–serine 360 participates in ATP binding. Serine 393 lines the L-serine pocket.

Belongs to the class-II aminoacyl-tRNA synthetase family. Type-1 seryl-tRNA synthetase subfamily. Homodimer. The tRNA molecule binds across the dimer.

It is found in the cytoplasm. The catalysed reaction is tRNA(Ser) + L-serine + ATP = L-seryl-tRNA(Ser) + AMP + diphosphate + H(+). It carries out the reaction tRNA(Sec) + L-serine + ATP = L-seryl-tRNA(Sec) + AMP + diphosphate + H(+). It functions in the pathway aminoacyl-tRNA biosynthesis; selenocysteinyl-tRNA(Sec) biosynthesis; L-seryl-tRNA(Sec) from L-serine and tRNA(Sec): step 1/1. Its function is as follows. Catalyzes the attachment of serine to tRNA(Ser). Is also able to aminoacylate tRNA(Sec) with serine, to form the misacylated tRNA L-seryl-tRNA(Sec), which will be further converted into selenocysteinyl-tRNA(Sec). The sequence is that of Serine--tRNA ligase from Blochmanniella floridana.